The following is a 626-amino-acid chain: Dual specificity testis-specific protein kinase 1 (626 aa).

The disordered stretch occupies residues 1 to 41 (MAGERPPLRGPGPGPGEVPGEGPPGPGGTGGGPGRGRPSSY). Positions 8–26 (LRGPGPGPGEVPGEGPPGP) are enriched in pro residues. The 258-residue stretch at 57 to 314 (FHCAEKIGAG…TEITQHLEWI (258 aa)) folds into the Protein kinase domain. ATP is bound by residues 63–71 (IGAGFFSEV) and lysine 86. The Proton acceptor role is filled by aspartate 175. The residue at position 220 (serine 220) is a Phosphoserine; by autocatalysis. Disordered stretches follow at residues 331-373 (HNQG…NWGD), 423-488 (ETLV…QLPL), and 529-564 (WAGEPWNRAQHSLPRAAALERTEPSPPPSAPREPDE). At arginine 338 the chain carries Omega-N-methylarginine. Residues 348–357 (PDPRLSRSRS) are compositionally biased toward basic and acidic residues. Residues 419–524 (VTTPETLVQP…NNNPPAVVVN (106 aa)) form a required for interaction with YWHAB region. Residues 476–485 (EPEPPGPAPQ) are compositionally biased toward pro residues. The tract at residues 527-624 (QGWAGEPWNR…PTPSLQLPGA (98 aa)) is required for interaction with PARVA. Residues 527 to 626 (QGWAGEPWNR…PSLQLPGARS (100 aa)) form a required for interaction with SPRED1 and SPRY2. Required for TESK1-mediated dephosphorylation of SPRY2 and SPRY2 inhibition of ERK phosphorylation region.

This sequence belongs to the protein kinase superfamily. TKL Ser/Thr protein kinase family. As to quaternary structure, interacts (via both C- and N-termini) with SPRY4 (via C-terminus); the interaction inhibits TESK1 kinase activity. Interacts with TAOK1; the interaction inhibits TAOK1 kinase activity. Interacts (via C-terminus) with SPRED1 (via C-terminus); the interaction inhibits TESK1 kinase activity. Interacts (via C-terminus) with PARVA/PARVIN (via C-terminus); the interaction inhibits TESK1 kinase activity. Interacts with YWHAB/14-3-3 beta; the interaction is dependent on the phosphorylation of TESK1 Ser-437 and inhibits TESK1 kinase activity. Interacts with SPRY1, SPRY3 and SPRED2. Interacts (via C-terminus) with SPRY2 (via C-terminus); the interaction disrupts SPRY2 interaction with PPP2CA/PP2A-C, possibly by vesicular sequestration of SPRY2. Therefore dephosphorylation of SPRY2 by the serine/threonine-protein phosphatase 2A (PP2A) holoenzyme is lost, inhibiting its interaction with GRB2. Requires Mg(2+) as cofactor. Mn(2+) is required as a cofactor. In terms of processing, autophosphorylated on serine and tyrosine residues. Expressed in podocytes and renal tubular cells in the kidney (at protein level).

Its subcellular location is the cytoplasm. It is found in the perinuclear region. The protein localises to the cytoskeleton. The protein resides in the microtubule organizing center. It localises to the centrosome. Its subcellular location is the cell projection. It is found in the lamellipodium. The enzyme catalyses L-seryl-[protein] + ATP = O-phospho-L-seryl-[protein] + ADP + H(+). It carries out the reaction L-threonyl-[protein] + ATP = O-phospho-L-threonyl-[protein] + ADP + H(+). The catalysed reaction is L-tyrosyl-[protein] + ATP = O-phospho-L-tyrosyl-[protein] + ADP + H(+). With respect to regulation, activated by autophosphorylation on Ser-220. Kinase activity is inhibited by SPRED1. In terms of biological role, dual specificity protein kinase activity catalyzing autophosphorylation and phosphorylation of exogenous substrates on both serine/threonine and tyrosine residues. Regulates the cellular cytoskeleton by enhancing actin stress fiber formation via phosphorylation of cofilin and by preventing microtubule breakdown via inhibition of TAOK1/MARKK kinase activity. Inhibits podocyte motility via regulation of actin cytoskeletal dynamics and phosphorylation of CFL1. Positively regulates integrin-mediated cell spreading, via phosphorylation of cofilin. Suppresses ciliogenesis via multiple pathways; phosphorylation of CFL1, suppression of ciliary vesicle directional trafficking to the ciliary base, and by facilitating YAP1 nuclear localization where it acts as a transcriptional corepressor of the TEAD4 target genes AURKA and PLK1. Probably plays a central role at and after the meiotic phase of spermatogenesis. The sequence is that of Dual specificity testis-specific protein kinase 1 (TESK1) from Homo sapiens (Human).